Here is a 197-residue protein sequence, read N- to C-terminus: Imidazoleglycerol-phosphate dehydratase (197 aa).

The protein belongs to the imidazoleglycerol-phosphate dehydratase family.

Its subcellular location is the cytoplasm. It catalyses the reaction D-erythro-1-(imidazol-4-yl)glycerol 3-phosphate = 3-(imidazol-4-yl)-2-oxopropyl phosphate + H2O. Its pathway is amino-acid biosynthesis; L-histidine biosynthesis; L-histidine from 5-phospho-alpha-D-ribose 1-diphosphate: step 6/9. This is Imidazoleglycerol-phosphate dehydratase from Chromobacterium violaceum (strain ATCC 12472 / DSM 30191 / JCM 1249 / CCUG 213 / NBRC 12614 / NCIMB 9131 / NCTC 9757 / MK).